The chain runs to 156 residues: MPRRRVIGQRKILPDPKFGSELLAKFINVVMVDGKKAVAEKIIYGALDILAEKSGKDRLEVFDTILDNIRPMVEVKSRRVGGSTYQVPVEVRPVRRNALAMRWLVDAARTRGEKSMSQRLAAEMLDASENKGSAVKKREDVHRMAEANKAFAHYRW.

This sequence belongs to the universal ribosomal protein uS7 family. As to quaternary structure, part of the 30S ribosomal subunit. Contacts proteins S9 and S11.

Its function is as follows. One of the primary rRNA binding proteins, it binds directly to 16S rRNA where it nucleates assembly of the head domain of the 30S subunit. Is located at the subunit interface close to the decoding center, probably blocks exit of the E-site tRNA. This Idiomarina loihiensis (strain ATCC BAA-735 / DSM 15497 / L2-TR) protein is Small ribosomal subunit protein uS7.